Reading from the N-terminus, the 223-residue chain is 7-cyano-7-deazaguanine synthase (223 aa).

15–25 (FSGGQDSTTCL) contributes to the ATP binding site. Zn(2+)-binding residues include Cys191, Cys200, Cys203, and Cys206.

The protein belongs to the QueC family. As to quaternary structure, homodimer. Zn(2+) is required as a cofactor.

It carries out the reaction 7-carboxy-7-deazaguanine + NH4(+) + ATP = 7-cyano-7-deazaguanine + ADP + phosphate + H2O + H(+). The protein operates within purine metabolism; 7-cyano-7-deazaguanine biosynthesis. In terms of biological role, catalyzes the ATP-dependent conversion of 7-carboxy-7-deazaguanine (CDG) to 7-cyano-7-deazaguanine (preQ(0)). This chain is 7-cyano-7-deazaguanine synthase, found in Staphylococcus epidermidis (strain ATCC 35984 / DSM 28319 / BCRC 17069 / CCUG 31568 / BM 3577 / RP62A).